Reading from the N-terminus, the 222-residue chain is Recombination protein RecR (222 aa).

The C4-type zinc finger occupies 57 to 72 (CPVCFNITDAERCDVC). Residues 80-173 (SVICVVEEPG…VVSRIAYGLP (94 aa)) enclose the Toprim domain. The disordered stretch occupies residues 189 to 222 (ALSGRRRVSEPASPPPPRRNDEEQDGAPARPPSH).

It belongs to the RecR family.

May play a role in DNA repair. It seems to be involved in an RecBC-independent recombinational process of DNA repair. It may act with RecF and RecO. This is Recombination protein RecR from Deinococcus geothermalis (strain DSM 11300 / CIP 105573 / AG-3a).